The chain runs to 483 residues: Bromoperoxidase-catalase (483 aa).

Residues methionine 1–glycine 24 form a disordered region. Residues histidine 54 and asparagine 127 contribute to the active site. Tyrosine 337 serves as a coordination point for heme.

It belongs to the catalase family.

The enzyme catalyses 2 H2O2 = O2 + 2 H2O. The polypeptide is Bromoperoxidase-catalase (bca) (Streptomyces venezuelae (strain ATCC 10712 / CBS 650.69 / DSM 40230 / JCM 4526 / NBRC 13096 / PD 04745)).